Reading from the N-terminus, the 479-residue chain is Nuclear envelope integral membrane protein 2 (479 aa).

The N-terminal stretch at 1-23 (MEKLAAFILVLTLLCAYWQSAEG) is a signal peptide. An N-linked (GlcNAc...) asparagine glycan is attached at N69. Helical transmembrane passes span 172–192 (LFFY…FLTL), 203–223 (LFLV…QRVL), 233–253 (HWME…AVCY), 276–296 (IVLL…VAVL), and 301–321 (ILPL…SFLA). N-linked (GlcNAc...) asparagine glycosylation occurs at N414. Residues 414–479 (NSSSSDTQSH…PLDPEDQDFF (66 aa)) are disordered. Low complexity predominate over residues 438 to 449 (NSPPVLNNLPSP). Residues 450 to 470 (TIYPPTICPYPPVTYTPQPEP) are compositionally biased toward pro residues.

The protein belongs to the NEMP family.

The protein localises to the nucleus inner membrane. In terms of biological role, contributes to nuclear envelope stiffness in germ cells. Involved in male and female fertility. In Danio rerio (Zebrafish), this protein is Nuclear envelope integral membrane protein 2.